Consider the following 75-residue polypeptide: Small ribosomal subunit protein bS18 (75 aa).

The protein belongs to the bacterial ribosomal protein bS18 family. Part of the 30S ribosomal subunit. Forms a tight heterodimer with protein bS6.

Binds as a heterodimer with protein bS6 to the central domain of the 16S rRNA, where it helps stabilize the platform of the 30S subunit. In Cereibacter sphaeroides (strain ATCC 17029 / ATH 2.4.9) (Rhodobacter sphaeroides), this protein is Small ribosomal subunit protein bS18.